The chain runs to 468 residues: 6-phosphogluconate dehydrogenase, decarboxylating (468 aa).

NADP(+)-binding positions include 10 to 15 (GMAVMG), 33 to 35 (NRS), 74 to 76 (VKA), and N102. Substrate contacts are provided by residues N102 and 128-130 (SGG). K183 acts as the Proton acceptor in catalysis. 186–187 (HN) contacts substrate. The active-site Proton donor is the E190. Residues Y191, K260, R287, R445, and H451 each contribute to the substrate site.

The protein belongs to the 6-phosphogluconate dehydrogenase family. Homodimer.

It catalyses the reaction 6-phospho-D-gluconate + NADP(+) = D-ribulose 5-phosphate + CO2 + NADPH. It functions in the pathway carbohydrate degradation; pentose phosphate pathway; D-ribulose 5-phosphate from D-glucose 6-phosphate (oxidative stage): step 3/3. Catalyzes the oxidative decarboxylation of 6-phosphogluconate to ribulose 5-phosphate and CO(2), with concomitant reduction of NADP to NADPH. The protein is 6-phosphogluconate dehydrogenase, decarboxylating (gnd) of Escherichia coli.